Consider the following 161-residue polypeptide: Cyclic pyranopterin monophosphate synthase (161 aa).

Residues 75-77 (LCH) and 113-114 (ME) each bind substrate. Aspartate 128 is an active-site residue.

The protein belongs to the MoaC family. Homohexamer; trimer of dimers.

It catalyses the reaction (8S)-3',8-cyclo-7,8-dihydroguanosine 5'-triphosphate = cyclic pyranopterin phosphate + diphosphate. Its pathway is cofactor biosynthesis; molybdopterin biosynthesis. In terms of biological role, catalyzes the conversion of (8S)-3',8-cyclo-7,8-dihydroguanosine 5'-triphosphate to cyclic pyranopterin monophosphate (cPMP). The sequence is that of Cyclic pyranopterin monophosphate synthase from Methylobacillus flagellatus (strain ATCC 51484 / DSM 6875 / VKM B-1610 / KT).